The primary structure comprises 1009 residues: Protein naked cuticle (1009 aa).

Polar residues-rich tracts occupy residues 68–83 (IITT…ASNK) and 121–130 (LPQDMSSSGS). Positions 68–166 (IITTPPGNAS…QQQTAAAATG (99 aa)) are disordered. Positions 152–166 (QQQQQQQQTAAAATG) are enriched in low complexity. The interaction with dsh stretch occupies residues 206 to 282 (EFTCDVSVEG…TVSPEGKSKS (77 aa)). Residues 217–253 (KSSQPLQFSFTFYDLDGHHGKITKDDIVGIVYTIYES) form the EF-hand domain. Disordered regions lie at residues 328 to 433 (MSKQ…QQQL), 456 to 479 (AGNE…RQQD), and 515 to 580 (GNDS…QQQR). The segment covering 349–359 (RRQHRYRPRKL) has biased composition (basic residues). Over residues 370 to 387 (NSEKEKERERERERESHA) the composition is skewed to basic and acidic residues. Basic residues predominate over residues 403 to 414 (KSHHHHHHHGRY). Residues 515 to 525 (GNDSGNWQNRH) are compositionally biased toward polar residues. Composition is skewed to low complexity over residues 526–535 (LQQSLQQQPQ) and 570–580 (HQQLQQQQQQR). The segment at 584–613 (ECWKSALNRNDLISIIRESMEKNRLCFQLN) is required for nuclear localization and inhibition of Wnt signaling. Disordered stretches follow at residues 619–662 (NVSP…SPLS), 773–799 (SAAH…HNQK), 835–899 (LQQK…SAGS), and 955–982 (TESG…LDTS). Composition is skewed to low complexity over residues 624-638 (RQPA…QRQR) and 653-662 (SPAAPQSPLS). The segment covering 843 to 857 (RRHRHKQQQQQHHHQ) has biased composition (basic residues). The span at 858–875 (QQQQQQQQQNQQQQQQQQ) shows a compositional bias: low complexity. Residues 968–979 (EADEGQEQEVEL) show a composition bias toward acidic residues.

The protein belongs to the NKD family. Interacts with dsh.

The protein localises to the cell membrane. It is found in the cytoplasm. The protein resides in the nucleus. Cell autonomous antagonist of the canonical Wnt signaling pathway. May activate a second Wnt signaling pathway that controls planar cell polarity. Required for neuroblast specification. In Drosophila pseudoobscura pseudoobscura (Fruit fly), this protein is Protein naked cuticle.